The following is a 219-amino-acid chain: LHFPL tetraspan subfamily member 5 protein (219 aa).

At 1–24 the chain is on the cytoplasmic side; the sequence is MVKLLPAQEAAKIYHTNYVRNSRA. Residues 25–45 form a helical membrane-spanning segment; that stretch reads VGVMWGTLTICFSVLVMALFI. Over 46–98 the chain is Extracellular; the sequence is QPYWIGDSVSTPQAGYFGLFSYCVGNVLSSELICKGGPLDFSSIPSRAFKTAM. The chain crosses the membrane as a helical span at residues 99–119; it reads FFVALAMFLIIGSIICFSLFF. Over 120–128 the chain is Cytoplasmic; that stretch reads VCNTATVYK. The chain crosses the membrane as a helical span at residues 129 to 149; the sequence is ICAWMQLAAATGLMIGCLVYP. Over 150–178 the chain is Extracellular; it reads DGWDSSEVRRMCGEQTGKYTLGHCTIRWA. The helical transmembrane segment at 179-199 threads the bilayer; sequence FMLAILSIGDALILSFLAFVL. The Cytoplasmic portion of the chain corresponds to 200–219; the sequence is GYRQDKLLPDDYKADGNEEV.

The protein belongs to the LHFP family. In terms of assembly, forms the MET channel composed of TMC (TMC1 or TMC2), TMIE, TOMT, CIB (CIB2 or CIB3), LHPL5 and PCDH15. Interaction with PCDH15 is required for efficient localization to hair bundles.

It localises to the cell membrane. Functionally, auxiliary subunit of the mechanotransducer (MET) non-specific cation channel complex located at the tips of the shorter stereocilia of cochlear hair cells and that mediates sensory transduction in the auditory system. The MET complex is composed of two dimeric pore-forming ion-conducting transmembrane TMC (TMC1 or TMC2) subunits, and aided by several auxiliary proteins including LHFPL5, TMIE, CIB2/3 and TOMT, and the tip-link PCDH15. Functionally couples PCDH15 to the transduction channel. This Rattus norvegicus (Rat) protein is LHFPL tetraspan subfamily member 5 protein.